We begin with the raw amino-acid sequence, 303 residues long: tRNA-cytidine(32) 2-sulfurtransferase (303 aa).

The PP-loop motif signature appears at 45–50; the sequence is SGGKDS. 3 residues coordinate [4Fe-4S] cluster: Cys-120, Cys-123, and Cys-211.

Belongs to the TtcA family. Homodimer. Mg(2+) serves as cofactor. Requires [4Fe-4S] cluster as cofactor.

The protein localises to the cytoplasm. The catalysed reaction is cytidine(32) in tRNA + S-sulfanyl-L-cysteinyl-[cysteine desulfurase] + AH2 + ATP = 2-thiocytidine(32) in tRNA + L-cysteinyl-[cysteine desulfurase] + A + AMP + diphosphate + H(+). It functions in the pathway tRNA modification. Functionally, catalyzes the ATP-dependent 2-thiolation of cytidine in position 32 of tRNA, to form 2-thiocytidine (s(2)C32). The sulfur atoms are provided by the cysteine/cysteine desulfurase (IscS) system. The polypeptide is tRNA-cytidine(32) 2-sulfurtransferase (Methylobacillus flagellatus (strain ATCC 51484 / DSM 6875 / VKM B-1610 / KT)).